The chain runs to 189 residues: MSDQQHSAPQNAAATASPSDSPEAVEATMAAHAADELGRLQNELAELKAKSADLADQFLRAKAEAENARRRADEEVSKARKFGIESFAESLLPVADSLTAALAIKDATIEQLREGTDATLRQLTSALERNKVLAIQPGAGEKFDPHQHQAISMVPAEQEPNTIVSVLQKGYVIADRVLRPALVTVAAPK.

A compositionally biased stretch (polar residues) spans 1 to 20 (MSDQQHSAPQNAAATASPSD). Positions 1–29 (MSDQQHSAPQNAAATASPSDSPEAVEATM) are disordered.

It belongs to the GrpE family. In terms of assembly, homodimer.

The protein resides in the cytoplasm. Its function is as follows. Participates actively in the response to hyperosmotic and heat shock by preventing the aggregation of stress-denatured proteins, in association with DnaK and GrpE. It is the nucleotide exchange factor for DnaK and may function as a thermosensor. Unfolded proteins bind initially to DnaJ; upon interaction with the DnaJ-bound protein, DnaK hydrolyzes its bound ATP, resulting in the formation of a stable complex. GrpE releases ADP from DnaK; ATP binding to DnaK triggers the release of the substrate protein, thus completing the reaction cycle. Several rounds of ATP-dependent interactions between DnaJ, DnaK and GrpE are required for fully efficient folding. The sequence is that of Protein GrpE from Paracidovorax citrulli (strain AAC00-1) (Acidovorax citrulli).